The following is a 118-amino-acid chain: V-type proton ATPase subunit G 1 (118 aa).

The residue at position 2 (Ala-2) is an N-acetylalanine.

Belongs to the V-ATPase G subunit family. In terms of assembly, V-ATPase is a heteromultimeric enzyme made up of two complexes: the ATP-hydrolytic V1 complex and the proton translocation V0 complex. The V1 complex consists of three catalytic AB heterodimers that form a heterohexamer, three peripheral stalks each consisting of EG heterodimers, one central rotor including subunits D and F, and the regulatory subunits C and H. The proton translocation complex V0 consists of the proton transport subunit a, a ring of proteolipid subunits c9c'', rotary subunit d, subunits e and f, and the accessory subunits ATP6AP1/Ac45 and ATP6AP2/PRR. As to expression, kidney; localizes to early distal nephron, encompassing thick ascending limbs and distal convoluted tubules (at protein level). Ubiquitous.

The protein resides in the apical cell membrane. In terms of biological role, subunit of the V1 complex of vacuolar(H+)-ATPase (V-ATPase), a multisubunit enzyme composed of a peripheral complex (V1) that hydrolyzes ATP and a membrane integral complex (V0) that translocates protons. V-ATPase is responsible for acidifying and maintaining the pH of intracellular compartments and in some cell types, is targeted to the plasma membrane, where it is responsible for acidifying the extracellular environment. In aerobic conditions, involved in intracellular iron homeostasis, thus triggering the activity of Fe(2+) prolyl hydroxylase (PHD) enzymes, and leading to HIF1A hydroxylation and subsequent proteasomal degradation. The sequence is that of V-type proton ATPase subunit G 1 (Atp6v1g1) from Mus musculus (Mouse).